Reading from the N-terminus, the 224-residue chain is MGRPDQTPSPRMNNNFNPVFHAQSEQPVDEKRVLQAEQIYPNNGGVVNQPNQVPMRPGPPTYINQSATFNQPYGVSMAGPVHTQPSNWTSGLFDCMNDGENALITCCFPFVTFGQIAEVIDEGATSCGTAGMLYGLICCLFAIPCVYTCTFRTKLRSKYGLPDAPAPDWITHCFCEYCALCQEYRELKNRGLDPSIGWIGNVQKQRMGQQQEMMAPPMGQRMMG.

Residues 131–151 form a helical membrane-spanning segment; it reads GMLYGLICCLFAIPCVYTCTF.

It belongs to the cornifelin family.

The protein localises to the membrane. Functionally, may be involved in heavy metals transport. The sequence is that of Protein PLANT CADMIUM RESISTANCE 6 (PCR6) from Arabidopsis thaliana (Mouse-ear cress).